The sequence spans 1009 residues: Epstein-Barr nuclear antigen 6 (1009 aa).

Disordered regions lie at residues 1 to 70 (MESF…RGWM), 356 to 504 (TVGE…GACV), 516 to 646 (VETT…PRPS), 663 to 922 (QPIQ…DSMA), 948 to 971 (PLDINATTPKRPRVEESSHGPARC), and 984 to 1009 (DNSEISVFPKDAKQTDYDASTESELD). Positions 12 to 31 (QSPDNERGDNVQTTGEHDQD) are enriched in basic and acidic residues. Residues 381–391 (VELESSDDELP) show a composition bias toward acidic residues. Polar residues predominate over residues 445–461 (AQSTPERPGPSEQSSVT). 2 stretches are compositionally biased toward pro residues: residues 479-495 (QPPPVPKPVPVKPTPPP) and 563-574 (AAGPPAAGPPAA). 2 stretches are compositionally biased toward polar residues: residues 622–641 (EITQMQQEPSSHLQSATQPT) and 664–679 (PIQSSHLSSMSPTQPI). A compositionally biased stretch (basic and acidic residues) spans 680 to 689 (SHEEQPRYED). 2 stretches are compositionally biased toward low complexity: residues 710–769 (APYQ…GYQE) and 776–798 (PYQGYQEQPAPQAPYQGYQEPPA). Polar residues predominate over residues 862–874 (DQVSQFPHLQSET). The segment covering 876–898 (PPRLQLSSVPLVSSSAPSWSSPQ) has biased composition (low complexity). The segment covering 899–916 (PRAPIRPIPTRFPPPPMP) has biased composition (pro residues).

It belongs to the herpesviridae EBNA-6 family. In terms of assembly, interacts with host CTPB1; this interaction leads to gene repression, but also seems to interfere with the repressive function of CtBP pre-bound to DNA, leading to EBNA6 mediated up-regulation of many host genes. Interacts with host MYC; this interaction enhances MYC stability. Interacts (via N-terminus) with host RBPJ. Interacts (via N-terminus) with host histone H2AX; this interaction facilitates H2AX proteasomal degradation. Interacts with host TP73; this interaction inhibits TP73-mediated apoptotic pathway. Interacts (via N-terminus) with host PIM1; this interaction upregulates and stabilizes PIM1 and induces cell proliferation by inhibiting the growth suppressive properties of p21.

It localises to the host nucleus. The protein resides in the host nucleus matrix. In terms of biological role, plays an essential role for the activation and immortalization of human B-cells. Represses transcription of viral promoters TP1 and Cp through interaction with host RBPJ, and inhibits EBNA2-mediated activation of these promoters. Targets host chromatin through interactions with host transcription factors, especially RBPJ and IRF4. Alternatively, EBNA6 also regulates the transcription of the EBV oncogene LMP1 in a cell cycle-dependent manner. Modulates the activity of several host proteins involved in cell cycle regulation including host cyclin A, MYC, RB, p21 and p27 mainly through binding to the host SCF(SKP2) complex. Inhibits the promoter of host H2AX and targets H2AX to proteasomal degradation in order to promote latency and cell proliferation. Upregulates host PIM1 expression and stabilization. Potentiates PIM1 to promote cell proliferation by inhibiting the growth suppressive properties of p21. The polypeptide is Epstein-Barr nuclear antigen 6 (EBNA6) (Epstein-Barr virus (strain GD1) (HHV-4)).